The following is a 979-amino-acid chain: Zinc finger BED domain-containing protein 6 (979 aa).

Positions 1–89 are required for nucleolar localization; that stretch reads MSVCTLSVPV…ILAKKFSKDL (89 aa). The BED-type 1 zinc-finger motif lies at 130 to 187; it reads AKTSIVWHFFHVDPQYTWRAICNLCEKSVSRGKPGSHLGTSTLQRHLQARHSPHWTRA. Residues Cys151, Cys154, His175, and His180 each contribute to the Zn(2+) site. The tract at residues 207–232 is disordered; sequence PSSGSNGSFEYIPTDPLDDNRMGKKH. Residues 264–321 form a BED-type 2 zinc finger; it reads AKTSAVWNFFYTDPQHISRAVCNICKRSVSRGRPGSHLGTSTLQRHLQATHPIHWAVA. Zn(2+) is bound by residues Cys285, Cys288, His309, and His314. A disordered region spans residues 333 to 383; sequence DEAETERSDLLSDTLHGEKSTGSQDLTAEDLSDSDSDEPMLEVENRSESPI. Residues 337-351 are compositionally biased toward basic and acidic residues; the sequence is TERSDLLSDTLHGEK. The segment covering 359 to 373 has biased composition (acidic residues); that stretch reads TAEDLSDSDSDEPML. Residue Ser381 is modified to Phosphoserine. An HATC (Hobo-Ac-Tam3) domain region spans residues 866-948; sequence VVDEYFKEKY…EQLMFLKMNL (83 aa).

Expressed in pancreatic islet cells (at protein level).

It localises to the nucleus. The protein localises to the nucleolus. Its subcellular location is the cytoplasm. Its function is as follows. Transcriptional repressor which binds to the consensus sequence 5'-GCTCGC-3', transcription regulation may be tissue-specific. Regulates the expression of target genes such as: IGF2, PGAP6/TMEM8, ENHO, and PIANP. Acts as a transcriptional repressor of growth factor IGF2, thereby negatively regulating postnatal growth of muscles and internal organs, especially in females. Negatively regulates myoblast differentiation and myoblast mitochondrial activity via its regulation of IGF2 transcription. Negatively regulates the cell cycle of myoblasts, potentially via transcriptional regulation of the E2F family of transcription factors such as: E2F1 and E2F2. Positively regulates the cell cycle and survival of pancreatic beta cells. Binds to the CDH2 gene and may directly repress CDH2 transcription. Probably by controlling CDH2 expression, regulates pancreatic beta cell adhesion, and formation of cell-to-cell junctions between pancreatic beta cells and neural crest stem cells. May also play a role in embryonic beta cell differentiation. May play a role in insulin sensitivity and glucose clearance. This is Zinc finger BED domain-containing protein 6 from Homo sapiens (Human).